Here is a 411-residue protein sequence, read N- to C-terminus: Peptide chain release factor subunit 1 (411 aa).

This sequence belongs to the eukaryotic release factor 1 family. As to quaternary structure, heterodimer of two subunits, one of which binds GTP.

It localises to the cytoplasm. In terms of biological role, directs the termination of nascent peptide synthesis (translation) in response to the termination codons UAA, UAG and UGA. This Methanosphaera stadtmanae (strain ATCC 43021 / DSM 3091 / JCM 11832 / MCB-3) protein is Peptide chain release factor subunit 1.